Here is a 236-residue protein sequence, read N- to C-terminus: MLKLEKITYLYDHLPMCFDLHIQPGERVAILGPSGAGKSTLLSLIAGFLAPTSGHMLLNNQDHTASPPAQRPVSMLFQENNLFAHLTVEQNIGLGLHPGLKLSGEQRLLLQHIAQQVGLESCLDRLPAQLSGGQRQRAALARCLVRSQPILLLDEPFSALDPALRNEMLQLVDQVCINRQLTLLMVSHNLDDAARIAQRTLLIVEGRIDYDGPTQALVDGSAAKASVLGIKSAVIS.

The 229-residue stretch at 2-230 (LKLEKITYLY…SAAKASVLGI (229 aa)) folds into the ABC transporter domain. ATP is bound at residue 32 to 39 (GPSGAGKS).

This sequence belongs to the ABC transporter superfamily. Thiamine importer (TC 3.A.1.19.1) family. The complex is composed of two ATP-binding proteins (ThiQ), two transmembrane proteins (ThiP) and a solute-binding protein (ThiB).

Its subcellular location is the cell inner membrane. The enzyme catalyses thiamine(out) + ATP + H2O = thiamine(in) + ADP + phosphate + H(+). In terms of biological role, part of the ABC transporter complex ThiBPQ involved in thiamine import. Responsible for energy coupling to the transport system. In Yersinia pseudotuberculosis serotype I (strain IP32953), this protein is Thiamine import ATP-binding protein ThiQ.